The chain runs to 193 residues: Large ribosomal subunit protein uL18 (193 aa).

It belongs to the universal ribosomal protein uL18 family. As to quaternary structure, part of the 50S ribosomal subunit. Contacts the 5S and 23S rRNAs.

Functionally, this is one of the proteins that bind and probably mediate the attachment of the 5S RNA into the large ribosomal subunit, where it forms part of the central protuberance. The chain is Large ribosomal subunit protein uL18 from Methanobrevibacter smithii (strain ATCC 35061 / DSM 861 / OCM 144 / PS).